A 321-amino-acid polypeptide reads, in one-letter code: Acetyl-coenzyme A carboxylase carboxyl transferase subunit alpha (321 aa).

The region spanning 39-293 is the CoA carboxyltransferase C-terminal domain; it reads KLEEKSRKLT…KTELKRNLEE (255 aa).

This sequence belongs to the AccA family. As to quaternary structure, acetyl-CoA carboxylase is a heterohexamer composed of biotin carboxyl carrier protein (AccB), biotin carboxylase (AccC) and two subunits each of ACCase subunit alpha (AccA) and ACCase subunit beta (AccD).

It is found in the cytoplasm. It carries out the reaction N(6)-carboxybiotinyl-L-lysyl-[protein] + acetyl-CoA = N(6)-biotinyl-L-lysyl-[protein] + malonyl-CoA. It participates in lipid metabolism; malonyl-CoA biosynthesis; malonyl-CoA from acetyl-CoA: step 1/1. In terms of biological role, component of the acetyl coenzyme A carboxylase (ACC) complex. First, biotin carboxylase catalyzes the carboxylation of biotin on its carrier protein (BCCP) and then the CO(2) group is transferred by the carboxyltransferase to acetyl-CoA to form malonyl-CoA. In Methylococcus capsulatus (strain ATCC 33009 / NCIMB 11132 / Bath), this protein is Acetyl-coenzyme A carboxylase carboxyl transferase subunit alpha.